A 135-amino-acid polypeptide reads, in one-letter code: T-cell receptor beta chain V region 3H.25 (135 aa).

An N-terminal signal peptide occupies residues 1–20 (MATRLLCYTVLCLLGARILN). The segment at 21-115 (SKVIQTPRYL…SALYLCASSL (95 aa)) is v segment. A disulfide bridge links C42 with C111. Positions 116–118 (FGT) are d segment. The segment at 119 to 135 (SDYTFGSGTRLLVIGKA) is j segment.

This Mus musculus (Mouse) protein is T-cell receptor beta chain V region 3H.25.